The sequence spans 4924 residues: Hydroxamate-type ferrichrome siderophore peptide synthetase (4924 aa).

Carrier domains are found at residues 715 to 791 (NQSE…ILLK), 2172 to 2246 (DGFQ…KRRR), 3254 to 3328 (NVVE…NTQT), and 4402 to 4478 (IHLN…QYEK). 4 positions are modified to O-(pantetheine 4'-phosphoryl)serine: Ser-752, Ser-2206, Ser-3288, and Ser-4439.

This sequence belongs to the ATP-dependent AMP-binding enzyme family.

The protein localises to the cytoplasm. Involved in intracellular and extracellular ferrichrome siderophore biosynthesis. This chain is Hydroxamate-type ferrichrome siderophore peptide synthetase (sib1), found in Schizosaccharomyces pombe (strain 972 / ATCC 24843) (Fission yeast).